We begin with the raw amino-acid sequence, 692 residues long: Ino eighty subunit 1 (692 aa).

A compositionally biased stretch (basic and acidic residues) spans 1–25 (MGKRVYDPIHDTFQLREDNSDETKA). Positions 1–133 (MGKRVYDPIH…RHLKKPDGEP (133 aa)) are disordered. A Phosphoserine modification is found at S27. A compositionally biased stretch (polar residues) spans 28 to 56 (PMQSVKSGSQEEASPSSIQSETETVTTKS). Over residues 64 to 80 (EIDDKNDDDSTQSEEEN) the composition is skewed to acidic residues. Positions 97–109 (GASTATGPVTTNT) are enriched in polar residues. Residues 340–385 (SKYVEVESKAQEQDMVDEQNEVKETEAENEKQESKAAYATTLFDIL) are a coiled coil. Residues 465 to 485 (FMSKMEEGRKRERTNVTEVKK) show a composition bias toward basic and acidic residues. Residues 465 to 550 (FMSKMEEGRK…VTPAAPTETE (86 aa)) are disordered. A phosphoserine mark is found at S487, S493, and S504. Residues 493–504 (SEEDGEGEDDKS) show a composition bias toward acidic residues. T507 bears the Phosphothreonine mark. The segment covering 513-528 (SLLTPTPILESSSPMT) has biased composition (polar residues).

Component of the chromatin-remodeling INO80 complex, at least composed of ARP4, ARP5, ARP8, RVB1, RVB2, TAF14, NHP10, IES1, IES3, IES4, IES6, ACT1, IES2, IES5 and INO80.

It localises to the nucleus. Probably involved in transcription regulation via its interaction with the INO80 complex, a chromatin-remodeling complex. The protein is Ino eighty subunit 1 (IES1) of Saccharomyces cerevisiae (strain ATCC 204508 / S288c) (Baker's yeast).